Reading from the N-terminus, the 260-residue chain is Cytochrome c oxidase subunit 2 (260 aa).

Residues 1 to 43 are Mitochondrial intermembrane-facing; that stretch reads MILRSLSCRFLTIALCDAAEPWQLGFQDAATPMMQGIIDLHHD. Residues 44 to 64 form a helical membrane-spanning segment; the sequence is IFFFLILILVFVLWMLVRALW. Residues 65–84 are Mitochondrial matrix-facing; sequence HFNEQTNPIPQRIVHGTTIE. Residues 85 to 105 form a helical membrane-spanning segment; it reads IIWTIFPSVILLFIAIPSFAL. Residues 106–260 lie on the Mitochondrial intermembrane side of the membrane; that stretch reads LYSMDGVLVD…VSNQLILQTN (155 aa). Positions 189, 224, 226, 228, 232, and 235 each coordinate Cu cation. Glu226 is a binding site for Mg(2+).

Belongs to the cytochrome c oxidase subunit 2 family. As to quaternary structure, component of the cytochrome c oxidase (complex IV, CIV), a multisubunit enzyme composed of a catalytic core of 3 subunits and several supernumerary subunits. The complex exists as a monomer or a dimer and forms supercomplexes (SCs) in the inner mitochondrial membrane with ubiquinol-cytochrome c oxidoreductase (cytochrome b-c1 complex, complex III, CIII). It depends on Cu cation as a cofactor.

It localises to the mitochondrion inner membrane. The catalysed reaction is 4 Fe(II)-[cytochrome c] + O2 + 8 H(+)(in) = 4 Fe(III)-[cytochrome c] + 2 H2O + 4 H(+)(out). Functionally, component of the cytochrome c oxidase, the last enzyme in the mitochondrial electron transport chain which drives oxidative phosphorylation. The respiratory chain contains 3 multisubunit complexes succinate dehydrogenase (complex II, CII), ubiquinol-cytochrome c oxidoreductase (cytochrome b-c1 complex, complex III, CIII) and cytochrome c oxidase (complex IV, CIV), that cooperate to transfer electrons derived from NADH and succinate to molecular oxygen, creating an electrochemical gradient over the inner membrane that drives transmembrane transport and the ATP synthase. Cytochrome c oxidase is the component of the respiratory chain that catalyzes the reduction of oxygen to water. Electrons originating from reduced cytochrome c in the intermembrane space (IMS) are transferred via the dinuclear copper A center (CU(A)) of subunit 2 and heme A of subunit 1 to the active site in subunit 1, a binuclear center (BNC) formed by heme A3 and copper B (CU(B)). The BNC reduces molecular oxygen to 2 water molecules using 4 electrons from cytochrome c in the IMS and 4 protons from the mitochondrial matrix. This is Cytochrome c oxidase subunit 2 (COX2) from Triticum aestivum (Wheat).